We begin with the raw amino-acid sequence, 80 residues long: MRTTLSIDDDVLLAVKERARREKRTAGEILSDLARQALTNQNPQPAASQEDAFHGFEPLPHRGGAVSNALIDRLRDEEAV.

A disordered region spans residues 40–68 (NQNPQPAASQEDAFHGFEPLPHRGGAVSN).

Possibly the antitoxin component of a type II toxin-antitoxin (TA) system. Its cognate toxin is VapC44 (Potential). The sequence is that of Putative antitoxin VapB44 (vapB44) from Mycobacterium tuberculosis (strain CDC 1551 / Oshkosh).